A 370-amino-acid polypeptide reads, in one-letter code: Formate dehydrogenase (370 aa).

Residues Ile94 and Asn120 each coordinate substrate. Residues 175-176 (RI), Asp196, 231-235 (PLHES), Thr257, Asp283, and 312-315 (HMSG) each bind NAD(+).

The protein belongs to the D-isomer specific 2-hydroxyacid dehydrogenase family. FDH subfamily. As to quaternary structure, homodimer.

The protein resides in the cytoplasm. It carries out the reaction formate + NAD(+) = CO2 + NADH. Its function is as follows. Catalyzes the NAD(+)-dependent oxidation of formate to carbon dioxide. Formate oxidation is the final step in the methanol oxidation pathway in methylotrophic microorganisms. Has a role in the detoxification of exogenous formate in non-methylotrophic organisms. This chain is Formate dehydrogenase, found in Chaetomium thermophilum (strain DSM 1495 / CBS 144.50 / IMI 039719) (Thermochaetoides thermophila).